The sequence spans 317 residues: Phosphopantothenate--cysteine ligase 1 (317 aa).

Belongs to the PPC synthetase family. In terms of assembly, homodimer.

It carries out the reaction (R)-4'-phosphopantothenate + L-cysteine + ATP = N-[(R)-4-phosphopantothenoyl]-L-cysteine + AMP + diphosphate + H(+). It participates in cofactor biosynthesis; coenzyme A biosynthesis; CoA from (R)-pantothenate: step 2/5. Functionally, catalyzes the first step in the biosynthesis of coenzyme A from vitamin B5/pantothenate, where cysteine is conjugated to 4'-phosphopantothenate to form 4-phosphopantothenoylcysteine. The catalytic activity is not CTP- but ATP-dependent. The sequence is that of Phosphopantothenate--cysteine ligase 1 (PPCS1) from Arabidopsis thaliana (Mouse-ear cress).